The following is a 339-amino-acid chain: DNA-directed RNA polymerase subunit alpha (339 aa).

Residues 1-233 (MVREEITGST…DLFLPFLHTE (233 aa)) form an alpha N-terminal domain (alpha-NTD) region. The alpha C-terminal domain (alpha-CTD) stretch occupies residues 264–339 (KKGIPLNCIF…IDLPKNKFSL (76 aa)).

It belongs to the RNA polymerase alpha chain family. In terms of assembly, in plastids the minimal PEP RNA polymerase catalytic core is composed of four subunits: alpha, beta, beta', and beta''. When a (nuclear-encoded) sigma factor is associated with the core the holoenzyme is formed, which can initiate transcription.

Its subcellular location is the plastid. It localises to the chloroplast. The catalysed reaction is RNA(n) + a ribonucleoside 5'-triphosphate = RNA(n+1) + diphosphate. DNA-dependent RNA polymerase catalyzes the transcription of DNA into RNA using the four ribonucleoside triphosphates as substrates. The chain is DNA-directed RNA polymerase subunit alpha from Zea mays (Maize).